The sequence spans 230 residues: Flagellar L-ring protein (230 aa).

The N-terminal stretch at 1-18 is a signal peptide; that stretch reads MNRLNIAVSCLATALLFG. Cysteine 19 is lipidated: N-palmitoyl cysteine. A lipid anchor (S-diacylglycerol cysteine) is attached at cysteine 19.

Belongs to the FlgH family. As to quaternary structure, the basal body constitutes a major portion of the flagellar organelle and consists of four rings (L,P,S, and M) mounted on a central rod.

Its subcellular location is the cell outer membrane. It localises to the bacterial flagellum basal body. Assembles around the rod to form the L-ring and probably protects the motor/basal body from shearing forces during rotation. In Legionella pneumophila (strain Paris), this protein is Flagellar L-ring protein.